The primary structure comprises 140 residues: Large ribosomal subunit protein bL17 (140 aa).

It belongs to the bacterial ribosomal protein bL17 family. In terms of assembly, part of the 50S ribosomal subunit. Contacts protein L32.

The polypeptide is Large ribosomal subunit protein bL17 (Rhizobium etli (strain ATCC 51251 / DSM 11541 / JCM 21823 / NBRC 15573 / CFN 42)).